Consider the following 101-residue polypeptide: Small ribosomal subunit protein bS18c (101 aa).

It belongs to the bacterial ribosomal protein bS18 family. In terms of assembly, part of the 30S ribosomal subunit.

The protein resides in the plastid. The protein localises to the chloroplast. The protein is Small ribosomal subunit protein bS18c of Eucalyptus globulus subsp. globulus (Tasmanian blue gum).